The primary structure comprises 261 residues: Nickel import ATP-binding protein NikD (261 aa).

Residues Leu-6 to Val-248 enclose the ABC transporter domain. An ATP-binding site is contributed by Gly-41–Ser-48.

The protein belongs to the ABC transporter superfamily. Nickel importer (TC 3.A.1.5.3) family. As to quaternary structure, the complex is composed of two ATP-binding proteins (NikD and NikE), two transmembrane proteins (NikB and NikC) and a solute-binding protein (NikA).

Its subcellular location is the cell inner membrane. It carries out the reaction Ni(2+)(out) + ATP + H2O = Ni(2+)(in) + ADP + phosphate + H(+). Functionally, part of the ABC transporter complex NikABCDE involved in nickel import. Responsible for energy coupling to the transport system. The protein is Nickel import ATP-binding protein NikD of Rhodospirillum rubrum (strain ATCC 11170 / ATH 1.1.1 / DSM 467 / LMG 4362 / NCIMB 8255 / S1).